The sequence spans 284 residues: Hypersensitive-induced response protein 1 (284 aa).

G2 is lipidated: N-myristoyl glycine.

Interacts with LRR1.

It is found in the cell membrane. Positive regulator of hypersensitive response (HR)-like cell death. May be involved in potassium ion channel regulation. This is Hypersensitive-induced response protein 1 from Oryza sativa subsp. japonica (Rice).